The following is a 710-amino-acid chain: Early transcription factor 82 kDa subunit (710 aa).

This sequence belongs to the poxviridae VETF large subunit family. Heterodimer of a 70 kDa and a 82 kDa subunit. Part of the early transcription complex composed of ETF, RAP94/OPG109, and the DNA-directed RNA polymerase.

The protein resides in the virion. Its function is as follows. Acts with RNA polymerase to initiate transcription from early gene promoters. Is recruited by the RPO-associated protein of 94 kDa RAP94/OPG109 to form the early transcription complex, which also contains the core RNA polymerase. ETF heterodimer binds to early gene promoters. This chain is Early transcription factor 82 kDa subunit (OPG133), found in Homo sapiens (Human).